The chain runs to 744 residues: Scytalone dehydratase-like protein Arp1 (744 aa).

Tyr621 lines the substrate pocket. Catalysis depends on residues His656 and His681. Asn702 contributes to the substrate binding site.

The protein belongs to the scytalone dehydratase family. Homotrimer. Each subunit contains an active site, located in the central part of the hydrophobic core of the monomer, which functions independently.

In terms of biological role, scytalone dehydratase-like protein; part of the Pks2 gene cluster that mediates the formation of infectious structures (appressoria), enabling these fungi to kill insects faster. The product of the Pks2 gene cluster is different from the one of Pks1 and has still not been identified. The polypeptide is Scytalone dehydratase-like protein Arp1 (Metarhizium brunneum (strain ARSEF 3297)).